The following is a 580-amino-acid chain: Aspartate--tRNA ligase (580 aa).

Glu-173 provides a ligand contact to L-aspartate. The segment at 195–198 is aspartate; sequence QIYK. An L-aspartate-binding site is contributed by Arg-217. Residues 217 to 219 and Gln-226 each bind ATP; that span reads RDE. Position 443 (His-443) interacts with L-aspartate. Glu-477 is an ATP binding site. Residue Arg-484 coordinates L-aspartate. 529 to 532 is an ATP binding site; it reads GIER.

This sequence belongs to the class-II aminoacyl-tRNA synthetase family. Type 1 subfamily. Homodimer.

It is found in the cytoplasm. The catalysed reaction is tRNA(Asp) + L-aspartate + ATP = L-aspartyl-tRNA(Asp) + AMP + diphosphate. Catalyzes the attachment of L-aspartate to tRNA(Asp) in a two-step reaction: L-aspartate is first activated by ATP to form Asp-AMP and then transferred to the acceptor end of tRNA(Asp). This chain is Aspartate--tRNA ligase, found in Malacoplasma penetrans (strain HF-2) (Mycoplasma penetrans).